The sequence spans 269 residues: Gap junction gamma-3 protein (269 aa).

At M1–R33 the chain is on the extracellular side. The chain crosses the membrane as a helical span at residues F34 to V54. Over F55–R86 the chain is Cytoplasmic. The chain crosses the membrane as a helical span at residues F87–L107. Residues Y108–L145 are Extracellular-facing. A helical membrane pass occupies residues L146–V166. The Cytoplasmic segment spans residues Q167–N205. The helical transmembrane segment at I206–G226 threads the bilayer. Residues L227–F269 are Extracellular-facing. S261 is modified (phosphoserine).

It belongs to the connexin family. Gamma-type subfamily. As to quaternary structure, a connexon is composed of a hexamer of connexins. As to expression, CNS specific. Expression is restricted to brain, spinal cord, and sciatic nerve.

The protein resides in the cell membrane. It is found in the cell junction. The protein localises to the gap junction. One gap junction consists of a cluster of closely packed pairs of transmembrane channels, the connexons, through which materials of low MW diffuse from one cell to a neighboring cell. The chain is Gap junction gamma-3 protein (Gjc3) from Mus musculus (Mouse).